Reading from the N-terminus, the 63-residue chain is Large ribosomal subunit protein uL29 (63 aa).

This sequence belongs to the universal ribosomal protein uL29 family.

This chain is Large ribosomal subunit protein uL29, found in Vibrio campbellii (strain ATCC BAA-1116).